The sequence spans 106 residues: Cell cycle protein GpsB (106 aa).

Residues 34–67 are a coiled coil; sequence LDVIIQDYDNFKQEIDRLKAENEKLKKSTPAVEQ. Residues 55-83 are disordered; that stretch reads NEKLKKSTPAVEQSRSRSQQPPTSQVNYD. Low complexity predominate over residues 70 to 79; sequence SRSQQPPTSQ.

This sequence belongs to the GpsB family. Forms polymers through the coiled coil domains. Interacts with PBP1, MreC and EzrA.

It localises to the cytoplasm. Its function is as follows. Divisome component that associates with the complex late in its assembly, after the Z-ring is formed, and is dependent on DivIC and PBP2B for its recruitment to the divisome. Together with EzrA, is a key component of the system that regulates PBP1 localization during cell cycle progression. Its main role could be the removal of PBP1 from the cell pole after pole maturation is completed. Also contributes to the recruitment of PBP1 to the division complex. Not essential for septum formation. In Oceanobacillus iheyensis (strain DSM 14371 / CIP 107618 / JCM 11309 / KCTC 3954 / HTE831), this protein is Cell cycle protein GpsB.